The following is a 209-amino-acid chain: Thiamine-phosphate synthase (209 aa).

4-amino-2-methyl-5-(diphosphooxymethyl)pyrimidine is bound by residues 38–42 and Asn-70; that span reads QYRDK. The Mg(2+) site is built by Asp-71 and Asp-89. Position 108 (Thr-108) interacts with 4-amino-2-methyl-5-(diphosphooxymethyl)pyrimidine. 135–137 contacts 2-[(2R,5Z)-2-carboxy-4-methylthiazol-5(2H)-ylidene]ethyl phosphate; that stretch reads SNT. A 4-amino-2-methyl-5-(diphosphooxymethyl)pyrimidine-binding site is contributed by Lys-138. Gly-165 serves as a coordination point for 2-[(2R,5Z)-2-carboxy-4-methylthiazol-5(2H)-ylidene]ethyl phosphate.

Belongs to the thiamine-phosphate synthase family. Mg(2+) serves as cofactor.

It carries out the reaction 2-[(2R,5Z)-2-carboxy-4-methylthiazol-5(2H)-ylidene]ethyl phosphate + 4-amino-2-methyl-5-(diphosphooxymethyl)pyrimidine + 2 H(+) = thiamine phosphate + CO2 + diphosphate. The enzyme catalyses 2-(2-carboxy-4-methylthiazol-5-yl)ethyl phosphate + 4-amino-2-methyl-5-(diphosphooxymethyl)pyrimidine + 2 H(+) = thiamine phosphate + CO2 + diphosphate. It catalyses the reaction 4-methyl-5-(2-phosphooxyethyl)-thiazole + 4-amino-2-methyl-5-(diphosphooxymethyl)pyrimidine + H(+) = thiamine phosphate + diphosphate. Its pathway is cofactor biosynthesis; thiamine diphosphate biosynthesis; thiamine phosphate from 4-amino-2-methyl-5-diphosphomethylpyrimidine and 4-methyl-5-(2-phosphoethyl)-thiazole: step 1/1. Its function is as follows. Condenses 4-methyl-5-(beta-hydroxyethyl)thiazole monophosphate (THZ-P) and 2-methyl-4-amino-5-hydroxymethyl pyrimidine pyrophosphate (HMP-PP) to form thiamine monophosphate (TMP). This is Thiamine-phosphate synthase from Ectopseudomonas mendocina (strain ymp) (Pseudomonas mendocina).